Reading from the N-terminus, the 215-residue chain is Ribonuclease T (215 aa).

Residues V20–F194 enclose the Exonuclease domain. 4 residues coordinate Mg(2+): D23, E25, H181, and D186. H181 serves as the catalytic Proton donor/acceptor.

It belongs to the RNase T family. In terms of assembly, homodimer. Requires Mg(2+) as cofactor.

In terms of biological role, trims short 3' overhangs of a variety of RNA species, leaving a one or two nucleotide 3' overhang. Responsible for the end-turnover of tRNA: specifically removes the terminal AMP residue from uncharged tRNA (tRNA-C-C-A). Also appears to be involved in tRNA biosynthesis. The protein is Ribonuclease T of Salmonella choleraesuis (strain SC-B67).